The primary structure comprises 478 residues: MSVCLEVDYTLYTELKKFLNGQPLFLFNADKNYVEVVPSSTLKFYIPIGLFSNSNVALIRPVHTTCTNHIESVDVTFPNLYPLQKHVVAEVTTSMRQKLSTHRPMYMTLHLSCGFGKTVTACYLMVVHRRKTVICVPNKMLIHQWKVAVELTKLSYIISTDGVSMLLKQLRTKTADVLIIVSRHLSNDYFCKKIHDEYDTFILDESHMYNLMNNSALTKFLTFYPPRICYFLTATPRLMNRIYCNDVVNVLKVSALTKRLKIVEYFFEPYSTDCIRQMAKHLNTENNKYHIYTEKILTEDLPRNNLIVETVSREFRNETIERVIVIVKLRKHMTFFYDRFVKEFGTDYVYLGDAKNKDTSTVVKSLLQKKKFIFVSTSHYSGTGLDIPSLDSLVICCAVLNSMQIEQLLGRVCRESESVKKTVFLFPNTSIREIKHSLGFFTERIVSISTDKLGFEQEGIEGTKEEPVLTKAFSSQTR.

The region spanning 98–254 (KLSTHRPMYM…NDVVNVLKVS (157 aa)) is the Helicase ATP-binding domain. 111–118 (LSCGFGKT) contacts ATP. Positions 204–207 (DESH) match the DESH box motif. In terms of domain architecture, Helicase C-terminal spans 302 to 468 (PRNNLIVETV…GIEGTKEEPV (167 aa)).

This sequence belongs to the helicase family. Poxviruses subfamily. Interacts with G2. Might be part of a transcription complex composed at least of G2, A18, and H5.

It is found in the virion. Functionally, DNA helicase which seems to act as a postreplicative transcription termination factor. Involved in ATP-dependent release of nascent RNA. Forms a stable complex with single-stranded DNA, and to a lesser extent RNA. In Rabbit fibroma virus (strain Kasza) (RFV), this protein is Transcript termination protein A18.